Here is an 844-residue protein sequence, read N- to C-terminus: Translation elongation factor 2 (844 aa).

The region spanning 17–348 is the tr-type G domain; it reads RNIRNMSVIA…MIAIHLPSPV (332 aa). 26–33 is a GTP binding site; that stretch reads AHVDHGKS. Threonine 57 and threonine 59 each carry phosphothreonine. GTP is bound by residues 162 to 165 and 219 to 221; these read NKMD and SGL. Serine 488 carries the phosphoserine modification. Histidine 701 carries the post-translational modification Diphthamide.

It belongs to the TRAFAC class translation factor GTPase superfamily. Classic translation factor GTPase family. EF-G/EF-2 subfamily. Post-translationally, phosphorylation by EF-2 kinase completely inactivates EF-2.

The protein resides in the cytoplasm. It carries out the reaction GTP + H2O = GDP + phosphate + H(+). Its function is as follows. Catalyzes the GTP-dependent ribosomal translocation step during translation elongation. During this step, the ribosome changes from the pre-translocational (PRE) to the post-translocational (POST) state as the newly formed A-site-bound peptidyl-tRNA and P-site-bound deacylated tRNA move to the P and E sites, respectively. Catalyzes the coordinated movement of the two tRNA molecules, the mRNA and conformational changes in the ribosome. This chain is Translation elongation factor 2, found in Bombyx mori (Silk moth).